The chain runs to 309 residues: Mitochondrial substrate carrier family protein ancA (309 aa).

Solcar repeat units follow at residues Ser-10–Phe-102, Lys-114–Ile-203, and Ala-216–Leu-299. 5 helical membrane-spanning segments follow: residues Phe-12–Gln-41, Leu-79–Phe-103, Thr-113–Phe-133, Val-181–Lys-201, and Trp-215–Phe-235. Residues Arg-84 and Lys-96 each coordinate ADP. Arg-239 lines the ADP pocket. An important for transport activity region spans residues Arg-239–Met-244. A Nucleotide carrier signature motif motif is present at residues Arg-239 to Met-244. The helical transmembrane segment at Ala-276–Tyr-293 threads the bilayer.

Belongs to the mitochondrial carrier (TC 2.A.29) family. As to quaternary structure, monomer.

It localises to the mitochondrion inner membrane. The catalysed reaction is ADP(in) + ATP(out) = ADP(out) + ATP(in). With respect to regulation, the matrix-open state (m-state) is inhibited by the membrane-permeable bongkrekic acid (BKA). The cytoplasmic-open state (c-state) is inhibited by the membrane-impermeable toxic inhibitor carboxyatractyloside (CATR). In terms of biological role, ADP:ATP antiporter that mediates import of ADP into the mitochondrial matrix for ATP synthesis, and export of ATP out to fuel the cell. Cycles between the cytoplasmic-open state (c-state) and the matrix-open state (m-state): operates by the alternating access mechanism with a single substrate-binding site intermittently exposed to either the cytosolic (c-state) or matrix (m-state) side of the inner mitochondrial membrane. This chain is Mitochondrial substrate carrier family protein ancA (ancA), found in Dictyostelium discoideum (Social amoeba).